We begin with the raw amino-acid sequence, 313 residues long: Probable cell division protein WhiA (313 aa).

The segment at residues 277–311 (SLKEVAAQVPDGPISKSGVNHRFQKIREIAKQLKE) is a DNA-binding region (H-T-H motif).

The protein belongs to the WhiA family.

Its function is as follows. Involved in cell division and chromosome segregation. The polypeptide is Probable cell division protein WhiA (Lactobacillus johnsonii (strain CNCM I-12250 / La1 / NCC 533)).